Reading from the N-terminus, the 449-residue chain is MNHTDTSPIKLRKNWNAREMQALFDERAGRTDPRIYTDEDLYQIELERVFGRSWLLLGHETQIKKPGDYTTNYMGEDPVLVVRQKDGSIAVFLNQCRHRGMRICRSDAGNAKAFTCSYHGWAYDTAGNLVNVPFEAESFPCLDKKEWSPLKARVATYKGLIFANWDHDAPDLDTYLGEAKFYMDHMLDRTEAGTEAIPGVQKWVIPCNWKLAAEQFCWDAYHAATTAHLSGILAGLPDGVELADLAPPTVGKQYRAPWGGHGSGFFIGEPDLLLAIMGPKITSYWTEGPASEKAAQRLGSVERGSKLTVEHMTVFPTCSFLLGANTVRTWHPRGPNEVEVWAFTVVDADAPDDIKEEFRRQTVRTFSAGGVFEQDDGENWVEIQHVLRGHKARSRPFNAEMSMGQTIDDDPVYPGRISNVYSDEAARGFYAQWLRMMTSSDWAALNATR.

In terms of domain architecture, Rieske spans Trp-54–Ala-163. Cys-96, His-98, Cys-116, and His-119 together coordinate [2Fe-2S] cluster. His-222, His-228, and Asp-376 together coordinate Fe cation.

It belongs to the bacterial ring-hydroxylating dioxygenase alpha subunit family. In terms of assembly, this dioxygenase system consists of four proteins: the two subunits of the oxygenase component (TecA1 and TecA2), a ferredoxin (TecA3) and a ferredoxin reductase (TecA4). It depends on [2Fe-2S] cluster as a cofactor. Requires Fe cation as cofactor.

The enzyme catalyses chlorobenzene + NADH + O2 + H(+) = (1R,2R)-3-chlorocyclohexa-3,5-diene-1,2-diol + NAD(+). It functions in the pathway aromatic compound metabolism. Its function is as follows. Part of the oxygenase component of the chlorobenzene dioxygenase system that catalyzes the dihydroxylation of a range of aromatic compounds, including chlorinated benzenes and toluenes, and dinuclear aromatics such as biphenyl and dibenzo-p-dioxin. The alpha subunit is responsible for substrate specificity. The polypeptide is Chlorobenzene dioxygenase subunit alpha (Cupriavidus sp. (strain PS12)).